Here is a 333-residue protein sequence, read N- to C-terminus: Phosphoribosylformylglycinamidine cyclo-ligase (333 aa).

It belongs to the AIR synthase family.

It is found in the cytoplasm. It carries out the reaction 2-formamido-N(1)-(5-O-phospho-beta-D-ribosyl)acetamidine + ATP = 5-amino-1-(5-phospho-beta-D-ribosyl)imidazole + ADP + phosphate + H(+). Its pathway is purine metabolism; IMP biosynthesis via de novo pathway; 5-amino-1-(5-phospho-D-ribosyl)imidazole from N(2)-formyl-N(1)-(5-phospho-D-ribosyl)glycinamide: step 2/2. The polypeptide is Phosphoribosylformylglycinamidine cyclo-ligase (Methanosarcina mazei (strain ATCC BAA-159 / DSM 3647 / Goe1 / Go1 / JCM 11833 / OCM 88) (Methanosarcina frisia)).